A 418-amino-acid polypeptide reads, in one-letter code: MVRTFAVTALALLPLVAAQQIGSTKEVHPQLTTYKCTSQGGCVKQNTSIVLDSGSHWIHAKGGEVSCTTSSGLDPALCPDKETCAENCVVEGITDYSQYGVQTRGDAMLLREYIKQNNQTKAPSPRVYLLDEDGENYSMLRLLNQEFTFDVDVSKLPCGMNGALYFSEMSASGGRSALNPAGAAYGTGYCDAQCYTNAWINGEANTAKAGLCCQEMDIWEANARANAFTPHPCNSTGLLGCAGDECNSVCDKAGCGFNPYALGARDYYGTAMTVDTTKPFTVVTQFLTADNSTTGALREIRRLYVQAGQVIQNAVVKVDGRTVNSITEPYCASQGVFEGLGGLRRMGEALGRGMVLSMSIWNDAGGFMHWLDSGNSGPCSSTEGDPSLIENKYPDTAVTFSKIRWGDLGTTFATRRLH.

The signal sequence occupies residues 1–18 (MVRTFAVTALALLPLVAA). Asparagine 46, asparagine 118, and asparagine 136 each carry an N-linked (GlcNAc...) asparagine glycan. The Nucleophile role is filled by glutamate 215. Glutamate 220 functions as the Proton donor in the catalytic mechanism. 2 N-linked (GlcNAc...) asparagine glycosylation sites follow: asparagine 234 and asparagine 291.

The protein belongs to the glycosyl hydrolase 7 (cellulase C) family.

Its subcellular location is the secreted. It catalyses the reaction Endohydrolysis of (1-&gt;4)-beta-D-glucosidic linkages in cellulose, lichenin and cereal beta-D-glucans.. Has endoglucanase activity on substrates containing beta-1,4 glycosidic bonds, like in carboxymethylcellulose (CMC), hydroxyethylcellulose (HEC) and beta-glucan. Involved in the degradation of complex natural cellulosic substrates. This is Probable endo-beta-1,4-glucanase celB (celB) from Aspergillus clavatus (strain ATCC 1007 / CBS 513.65 / DSM 816 / NCTC 3887 / NRRL 1 / QM 1276 / 107).